Here is an 876-residue protein sequence, read N- to C-terminus: GRB2-associated and regulator of MAPK protein 1 (876 aa).

The interval lysine 12–glutamate 320 is CABIT. Residues tyrosine 105 and tyrosine 453 each carry the phosphotyrosine modification. Residues isoleucine 496–serine 572 are disordered. The segment at glycine 498–proline 550 is necessary for interaction with GRB2. The span at arginine 558 to serine 572 shows a compositional bias: polar residues. Phosphoserine is present on residues serine 610 and serine 614. Disordered stretches follow at residues tryptophan 626–asparagine 664 and alanine 738–serine 763. Composition is skewed to polar residues over residues serine 631 to serine 640 and arginine 648 to proline 658. The SAM domain maps to leucine 811–isoleucine 876.

Belongs to the GAREM family. Isoform 1 interacts with EGFR. Isoform 1 interacts (via proline-rich domain and phosphorylated at Tyr-105 and Tyr-453) with GRB2 (via SH3 domains); the interaction occurs upon EGF stimulation. Isoform 1 interacts (phosphorylated at Tyr-453) with PTPN11; the interaction increases MAPK/ERK activity and does not affect the GRB2/SOS complex formation. Isoform 2 does not interact with GRB2. On EGF stimulation, phosphorylated on Tyr-105 and Tyr-453. Isoform 1 is ubiquitously expressed.

In terms of biological role, acts as an adapter protein that plays a role in intracellular signaling cascades triggered either by the cell surface activated epidermal growth factor receptor and/or cytoplasmic protein tyrosine kinases. Promotes activation of the MAPK/ERK signaling pathway. Plays a role in the regulation of cell proliferation. The chain is GRB2-associated and regulator of MAPK protein 1 (GAREM1) from Homo sapiens (Human).